The primary structure comprises 400 residues: Elongation factor Tu (400 aa).

Residues 10 to 209 (KPHVNIGTIG…NVDAYIPTPE (200 aa)) form the tr-type G domain. A G1 region spans residues 19–26 (GHVDHGKT). GTP is bound at residue 19–26 (GHVDHGKT). Threonine 26 lines the Mg(2+) pocket. Residues 60 to 64 (GITIN) form a G2 region. Residues 81-84 (DCPG) form a G3 region. Residues 81-85 (DCPGH) and 136-139 (NKSD) contribute to the GTP site. The G4 stretch occupies residues 136 to 139 (NKSD). A G5 region spans residues 174-176 (SGL).

This sequence belongs to the TRAFAC class translation factor GTPase superfamily. Classic translation factor GTPase family. EF-Tu/EF-1A subfamily. As to quaternary structure, monomer.

The protein resides in the cytoplasm. It carries out the reaction GTP + H2O = GDP + phosphate + H(+). Its function is as follows. GTP hydrolase that promotes the GTP-dependent binding of aminoacyl-tRNA to the A-site of ribosomes during protein biosynthesis. This is Elongation factor Tu from Desulforamulus reducens (strain ATCC BAA-1160 / DSM 100696 / MI-1) (Desulfotomaculum reducens).